A 133-amino-acid polypeptide reads, in one-letter code: Snaclec A9 (133 aa).

3 cysteine pairs are disulfide-bonded: Cys4/Cys15, Cys32/Cys131, and Cys106/Cys123. One can recognise a C-type lectin domain in the interval 11 to 132 (YEGHCYKVFN…CGQPYRFTCE (122 aa)).

It belongs to the snaclec family. In terms of assembly, heterodimer; disulfide-linked. Expressed by the venom gland.

The protein resides in the secreted. In terms of biological role, interferes with one step of hemostasis (modulation of platelet aggregation, or coagulation cascade, for example). This Macrovipera lebetinus (Levantine viper) protein is Snaclec A9.